Consider the following 664-residue polypeptide: MAACTLHALSVTLFLLLFFAVSPAKAQQPYVNNHQLACEVRVYDNITNGFTCNGPPSCRSYLTFWSQPPYNTADSIAKLLNVSAAEIQSINNLPTATTRIPTRELVVIPANCSCSSSSGGFYQHNATYNLSGNRGDETYFSVANDTYQALSTCQAMMSQNRYGERQLTPGLNLLVPLRCACPTAKQTTAGFKYLLTYLVAMGDSISGIAEMFNSTSAAITEGNELTSDNIFFFTPVLVPLTTEPTKIVISPSPPPPPVVATPPQTPVDPPGSSSSHKWIYIGIGIGAGLLLLLSILALCFYKRRSKKKSLPSSLPEENKLFDSSTKQSIPTTTTTQWSIDLSNSSEAFGLKSAIESLTLYRFNDLQSATSNFSDENRIKGSVYRATINGDDAAVKVIKGDVSSSEINLLKKLNHSNIIRLSGFCIREGTSYLVFEYSENGSISDWLHSSGKKSLTWKQRVEIARDVAEALDYLHNYITPPHIHKNLESTNILLDSNFRAKIANFGVARILDEGDLDLQLTRHVEGTQGYLAPEYVENGVITSKLDVFAFGVAVLELLSGREAVTIHKKKEGEEEVEMLCKVINSVLGGENVREKLKEFMDPSLGNEYPLELAYTMAQLAKSCVATDLNSRPSVTQVLTTLSMIVSSSIDWEPSDDLLRSGSLGN.

The signal sequence occupies residues 1-26 (MAACTLHALSVTLFLLLFFAVSPAKA). Residues 27–277 (QQPYVNNHQL…DPPGSSSSHK (251 aa)) are Extracellular-facing. Residues asparagine 45, asparagine 81, asparagine 111, asparagine 125, and asparagine 129 are each glycosylated (N-linked (GlcNAc...) asparagine). Disulfide bonds link cysteine 52/cysteine 114, cysteine 58/cysteine 181, and cysteine 112/cysteine 179. 135–141 (GDETYFS) serves as a coordination point for chitin. N-linked (GlcNAc...) asparagine glycosylation is present at asparagine 144. 164–170 (ERQLTPG) serves as a coordination point for chitin. Residues 195-238 (LTYLVAMGDSISGIAEMFNSTSAAITEGNELTSDNIFFFTPVLV) form the LysM domain. Asparagine 213 carries N-linked (GlcNAc...) asparagine glycosylation. A compositionally biased stretch (pro residues) spans 251–269 (PSPPPPPVVATPPQTPVDP). Residues 251–270 (PSPPPPPVVATPPQTPVDPP) are disordered. A helical transmembrane segment spans residues 278–298 (WIYIGIGIGAGLLLLLSILAL). Topologically, residues 299–664 (CFYKRRSKKK…DLLRSGSLGN (366 aa)) are cytoplasmic. In terms of domain architecture, Protein kinase spans 351–643 (KSAIESLTLY…TQVLTTLSMI (293 aa)). Residues 357-365 (LTLYRFNDL) and lysine 395 contribute to the ATP site.

Belongs to the protein kinase superfamily. Ser/Thr protein kinase family.

It is found in the cell membrane. In terms of biological role, may recognize microbe-derived N-acetylglucosamine (NAG)-containing ligands. The protein is Protein LYK5 (LYK5) of Arabidopsis thaliana (Mouse-ear cress).